The chain runs to 131 residues: Translation initiation factor 5A (131 aa).

At Lys-37 the chain carries Hypusine.

Belongs to the eIF-5A family.

It is found in the cytoplasm. Functionally, functions by promoting the formation of the first peptide bond. The protein is Translation initiation factor 5A (eIF5A) of Methanococcus maripaludis (strain C6 / ATCC BAA-1332).